The chain runs to 176 residues: MKASGTLREYKVVGRCLPTPKCHTPPLYRMRIFAPNHVVAKSRFWYFVSQLKKMKKSSGEIVYCGQVFEKSPLRVKNFGIWLRYDSRSGTHNMYREYRDLTTAGAVTQCYRDMGARHRARAHSIQIMKVEEIAAGKCRRPAVKQFHDSKIKFPLPHRVLRRQHKPRFTTKRPNTFF.

Lys-11 is covalently cross-linked (Glycyl lysine isopeptide (Lys-Gly) (interchain with G-Cter in SUMO2)). At Tyr-63 the chain carries Phosphotyrosine. Ser-71 is subject to Phosphoserine. N6-succinyllysine is present on Lys-76. Ser-123 bears the Phosphoserine mark. Residues Lys-128 and Lys-170 each participate in a glycyl lysine isopeptide (Lys-Gly) (interchain with G-Cter in SUMO2) cross-link.

It belongs to the eukaryotic ribosomal protein eL20 family. In terms of assembly, component of the large ribosomal subunit. Binds IPO9 with high affinity.

Its subcellular location is the cytoplasm. Component of the large ribosomal subunit. The ribosome is a large ribonucleoprotein complex responsible for the synthesis of proteins in the cell. The chain is Large ribosomal subunit protein eL20 (Rpl18a) from Mus musculus (Mouse).